The following is a 202-amino-acid chain: Imidazole glycerol phosphate synthase subunit HisH 2 (202 aa).

The region spanning 1–202 is the Glutamine amidotransferase type-1 domain; the sequence is MIVVIDYGVG…QLFKNFVELV (202 aa). Cysteine 80 acts as the Nucleophile in catalysis. Catalysis depends on residues histidine 183 and glutamate 185.

As to quaternary structure, heterodimer of HisH and HisF.

The protein localises to the cytoplasm. It catalyses the reaction 5-[(5-phospho-1-deoxy-D-ribulos-1-ylimino)methylamino]-1-(5-phospho-beta-D-ribosyl)imidazole-4-carboxamide + L-glutamine = D-erythro-1-(imidazol-4-yl)glycerol 3-phosphate + 5-amino-1-(5-phospho-beta-D-ribosyl)imidazole-4-carboxamide + L-glutamate + H(+). The catalysed reaction is L-glutamine + H2O = L-glutamate + NH4(+). The protein operates within amino-acid biosynthesis; L-histidine biosynthesis; L-histidine from 5-phospho-alpha-D-ribose 1-diphosphate: step 5/9. In terms of biological role, IGPS catalyzes the conversion of PRFAR and glutamine to IGP, AICAR and glutamate. The HisH subunit catalyzes the hydrolysis of glutamine to glutamate and ammonia as part of the synthesis of IGP and AICAR. The resulting ammonia molecule is channeled to the active site of HisF. The sequence is that of Imidazole glycerol phosphate synthase subunit HisH 2 (hisH2) from Pseudomonas aeruginosa (strain ATCC 15692 / DSM 22644 / CIP 104116 / JCM 14847 / LMG 12228 / 1C / PRS 101 / PAO1).